Consider the following 335-residue polypeptide: Acetyl-coenzyme A carboxylase carboxyl transferase subunit alpha (335 aa).

In terms of domain architecture, CoA carboxyltransferase C-terminal spans 48–308 (TLEKKVDALR…KGMLIEELKA (261 aa)).

Belongs to the AccA family. As to quaternary structure, acetyl-CoA carboxylase is a heterohexamer composed of biotin carboxyl carrier protein (AccB), biotin carboxylase (AccC) and two subunits each of ACCase subunit alpha (AccA) and ACCase subunit beta (AccD).

Its subcellular location is the cytoplasm. The enzyme catalyses N(6)-carboxybiotinyl-L-lysyl-[protein] + acetyl-CoA = N(6)-biotinyl-L-lysyl-[protein] + malonyl-CoA. Its pathway is lipid metabolism; malonyl-CoA biosynthesis; malonyl-CoA from acetyl-CoA: step 1/1. Component of the acetyl coenzyme A carboxylase (ACC) complex. First, biotin carboxylase catalyzes the carboxylation of biotin on its carrier protein (BCCP) and then the CO(2) group is transferred by the carboxyltransferase to acetyl-CoA to form malonyl-CoA. In Chlorobium luteolum (strain DSM 273 / BCRC 81028 / 2530) (Pelodictyon luteolum), this protein is Acetyl-coenzyme A carboxylase carboxyl transferase subunit alpha.